Consider the following 213-residue polypeptide: Anti-sigma-E factor ChrR (213 aa).

The interval 2–85 is sufficient to bind sigma factor and inhibit its activity; the sequence is TIRHHVSDAL…QIQRPAPARR (84 aa). His6, His31, Cys35, Cys38, His141, His143, Glu147, and His177 together coordinate Zn(2+). A required for response to singlet oxygen region spans residues 86–194; it reads ADPRAPAPLA…LDCICLAATD (109 aa).

The protein belongs to the zinc-associated anti-sigma factor (ZAS) superfamily. As to quaternary structure, forms a 1:1 complex with cognate ECF RNA polymerase sigma factor RpoE; this inhibits the interaction of RpoE with the RNA polymerase catalytic core. It depends on Zn(2+) as a cofactor.

Its function is as follows. Anti-sigma factor that inhibits the activity of the extracytoplasmic function (ECF) sigma-E factor (RpoE), thereby indirectly regulating the transcription of the cycA and rpoE genes. ECF sigma factors are held in an inactive form by a cognate anti-sigma factor. The sequence is that of Anti-sigma-E factor ChrR (chrR) from Cereibacter sphaeroides (strain ATCC 17023 / DSM 158 / JCM 6121 / CCUG 31486 / LMG 2827 / NBRC 12203 / NCIMB 8253 / ATH 2.4.1.) (Rhodobacter sphaeroides).